Here is a 217-residue protein sequence, read N- to C-terminus: MAETASTETTPAAPPAEPKQKKKKQQPKKAAGGAKAKKPSGPSASELIVKSVSASKERGGVSLAALKKALAAGGYDVERNNSRLKLALKALVTKGTLTQVKGSGASGSFKLNKKQLETKVKAVAKKKLVAPKAKKPVTAKKKPKSPKKPKKVSAAAAKSPKKAKKPVKAAKSPKKPKAVKSKKVTKSPAKKATKPKAAKAKIAKAKAAKGKKAAAKK.

2 stretches are compositionally biased toward low complexity: residues 1–11 (MAETASTETTP) and 28–45 (KKAAGGAKAKKPSGPSAS). Disordered regions lie at residues 1 to 45 (MAET…PSAS) and 123 to 217 (VAKK…AAKK). Residues 40 to 113 (SGPSASELIV…GASGSFKLNK (74 aa)) form the H15 domain. 2 stretches are compositionally biased toward basic residues: residues 123 to 151 (VAKKKLVAPKAKKPVTAKKKPKSPKKPKK) and 159 to 217 (SPKK…AAKK).

Belongs to the histone H1/H5 family.

The protein localises to the nucleus. The protein resides in the chromosome. Its function is as follows. Histones H1 are necessary for the condensation of nucleosome chains into higher-order structures. The polypeptide is Histone H1C (Xenopus laevis (African clawed frog)).